The chain runs to 130 residues: Small ribosomal subunit protein uS9 (130 aa).

It belongs to the universal ribosomal protein uS9 family.

This Aliivibrio fischeri (strain MJ11) (Vibrio fischeri) protein is Small ribosomal subunit protein uS9.